Consider the following 666-residue polypeptide: Vicilin-like antimicrobial peptides 2-1 (666 aa).

The first 27 residues, 1 to 27 (MAINTSNLCSLLFLLSLFLLSTTVSLA), serve as a signal peptide directing secretion. 2 disordered regions span residues 161-191 (QQKR…DPQQ) and 219-254 (QQRQ…PYYF). Cupin type-1 domains are found at residues 271–410 (SVLE…EKLR) and 455–625 (YNLF…KEVE). A disordered region spans residues 629 to 655 (NSQDQSIFFPGPRQHQQQSPRSTKQQQ). Positions 642–655 (QHQQQSPRSTKQQQ) are enriched in low complexity.

It belongs to the 7S seed storage protein family.

The protein localises to the secreted. In terms of biological role, antimicrobial peptides 2b, 2c and 2d have antibacterial and antifungal activity against a range of species. This is Vicilin-like antimicrobial peptides 2-1 from Macadamia integrifolia (Macadamia nut).